A 451-amino-acid chain; its full sequence is Tubulin beta-1 chain (451 aa).

An MREI motif motif is present at residues 1 to 4 (MREI). Residues glutamine 11, glutamate 69, serine 138, glycine 142, threonine 143, and glycine 144 each contribute to the GTP site. Glutamate 69 provides a ligand contact to Mg(2+). Serine 172 is subject to Phosphoserine; by CDK1. GTP is bound by residues asparagine 204 and asparagine 226. The tract at residues 430–451 (AGLEDSEEDVEEAEVEAEDKDH) is disordered. Residues 433-451 (EDSEEDVEEAEVEAEDKDH) show a composition bias toward acidic residues. Serine 435 carries the phosphoserine modification. 5-glutamyl polyglutamate is present on glutamate 440.

Belongs to the tubulin family. In terms of assembly, dimer of alpha and beta chains. A typical microtubule is a hollow water-filled tube with an outer diameter of 25 nm and an inner diameter of 15 nM. Alpha-beta heterodimers associate head-to-tail to form protofilaments running lengthwise along the microtubule wall with the beta-tubulin subunit facing the microtubule plus end conferring a structural polarity. Microtubules usually have 13 protofilaments but different protofilament numbers can be found in some organisms and specialized cells. Interacts with RANBP10. It depends on Mg(2+) as a cofactor. Post-translationally, some glutamate residues at the C-terminus are polyglycylated, resulting in polyglycine chains on the gamma-carboxyl group. Glycylation is mainly limited to tubulin incorporated into axonemes (cilia and flagella) whereas glutamylation is prevalent in neuronal cells, centrioles, axonemes, and the mitotic spindle. Both modifications can coexist on the same protein on adjacent residues, and lowering polyglycylation levels increases polyglutamylation, and reciprocally. Cilia and flagella glycylation is required for their stability and maintenance. Flagella glycylation controls sperm motility. In terms of processing, some glutamate residues at the C-terminus are polyglutamylated, resulting in polyglutamate chains on the gamma-carboxyl group. Polyglutamylation plays a key role in microtubule severing by spastin (SPAST). SPAST preferentially recognizes and acts on microtubules decorated with short polyglutamate tails: severing activity by SPAST increases as the number of glutamates per tubulin rises from one to eight, but decreases beyond this glutamylation threshold. Glutamylation is also involved in cilia motility. Phosphorylated on Ser-172 by CDK1 during the cell cycle, from metaphase to telophase, but not in interphase. This phosphorylation inhibits tubulin incorporation into microtubules.

The protein localises to the cytoplasm. It localises to the cytoskeleton. Functionally, tubulin is the major constituent of microtubules, a cylinder consisting of laterally associated linear protofilaments composed of alpha- and beta-tubulin heterodimers. Microtubules grow by the addition of GTP-tubulin dimers to the microtubule end, where a stabilizing cap forms. Below the cap, tubulin dimers are in GDP-bound state, owing to GTPase activity of alpha-tubulin. This chain is Tubulin beta-1 chain (Tubb1), found in Mus musculus (Mouse).